A 326-amino-acid polypeptide reads, in one-letter code: uncharacterized protein (326 aa).

2 helical membrane passes run 9 to 29 (WVVL…RWSL) and 33 to 53 (ISIC…ANSY). The NADP(+) site is built by aspartate 120, asparagine 148, tyrosine 214, lysine 218, and threonine 252. Tyrosine 214 functions as the Proton acceptor in the catalytic mechanism. The active-site Lowers pKa of active site Tyr is lysine 218.

This sequence belongs to the short-chain dehydrogenases/reductases (SDR) family.

It localises to the mitochondrion membrane. Functionally, involved in the resistance to DNA-damaging agents. This is an uncharacterized protein from Saccharomyces cerevisiae (strain ATCC 204508 / S288c) (Baker's yeast).